The sequence spans 45 residues: Defensin Tk-AMP-D3 (45 aa).

Cystine bridges form between Cys3–Cys45, Cys14–Cys34, Cys20–Cys39, and Cys24–Cys41.

Its function is as follows. Plant defense peptide. The polypeptide is Defensin Tk-AMP-D3 (Triticum kiharae (Wheat)).